We begin with the raw amino-acid sequence, 522 residues long: Sensory neuron membrane protein 1 (522 aa).

Residues 1 to 11 lie on the Cytoplasmic side of the membrane; the sequence is MKLPKHLKFAA. The helical transmembrane segment at 12 to 32 threads the bilayer; the sequence is GAGGAFLFGILFGWVMFPAIL. Over 33 to 455 the chain is Extracellular; the sequence is KGQLKKEMAL…KFQLFYPKKA (423 aa). Asparagine 67 and asparagine 229 each carry an N-linked (GlcNAc...) asparagine glycan. Disulfide bonds link cysteine 268–cysteine 333, cysteine 297–cysteine 350, and cysteine 335–cysteine 339. A glycan (N-linked (GlcNAc...) asparagine) is linked at asparagine 438. Residues 456–476 form a helical membrane-spanning segment; that stretch reads VGVIKWLLVTFGGFGLIGCTI. Over 477 to 522 the chain is Cytoplasmic; it reads YHYKDRIMSFASSPGSAAVTKVKPEEVEQKDVSVIGQPQEPAKINM.

Belongs to the CD36 family.

The protein resides in the cell membrane. Plays an olfactory role that is not restricted to pheromone sensitivity. This chain is Sensory neuron membrane protein 1, found in Plutella xylostella (Diamondback moth).